Here is a 65-residue protein sequence, read N- to C-terminus: pH-response transcription factor pacC/RIM101 (65 aa).

Residues 16–40 (LTCQWNSCRTTTVKRDHITSHIRVH) form a C2H2-type 1 zinc finger. Residues 46–65 (HKCEFCGKSFKRPQDLKKHV) form a C2H2-type 2; degenerate zinc finger.

It belongs to the pacC/RIM101 family.

It localises to the nucleus. In terms of biological role, transcription factor that mediates regulation of both acid- and alkaline-expressed genes in response to ambient pH. At alkaline ambient pH, activates transcription of alkaline-expressed genes (including pac1 itself) and represses transcription of acid-expressed genes. The polypeptide is pH-response transcription factor pacC/RIM101 (pac1) (Colletotrichum gloeosporioides (Anthracnose fungus)).